We begin with the raw amino-acid sequence, 151 residues long: Neuroglobin (151 aa).

In terms of domain architecture, Globin spans methionine 1 to aspartate 149. The heme b site is built by histidine 64 and histidine 96.

Belongs to the globin family. As to quaternary structure, monomer. Homodimer and homotetramer; disulfide-linked. Mainly monomeric but also detected as part of homodimers and homotetramers. Interacts with 14-3-3 proteins; regulates the phosphorylation of NGB. Could interact (ferrous form) with G-alpha(i) proteins (GTP-bound form). In terms of processing, phosphorylated during hypoxia by ERK1/ERK2. Phosphorylation regulates the heme pocket hexacoordination preventing the association of His-64 with the heme metal center. Thereby, promotes the access of dioxygen and nitrite to the heme and stimulates the nitrite reductase activity. Phosphorylation during hypoxia is stabilized by 14-3-3 proteins. In terms of tissue distribution, widely distributed throughout the adult brain, including cerebral cortex, hippocampus, thalamus, hypothalamus, olfactory bulb, and cerebellum.

It localises to the cytoplasm. The protein resides in the cytosol. It is found in the mitochondrion matrix. The catalysed reaction is Fe(III)-heme b-[protein] + nitric oxide + H2O = Fe(II)-heme b-[protein] + nitrite + 2 H(+). Its function is as follows. Monomeric globin with a bis-histidyl six-coordinate heme-iron atom through which it can bind dioxygen, carbon monoxide and nitric oxide. Could help transport oxygen and increase its availability to the metabolically active neuronal tissues, though its low quantity in tissues as well as its high affinity for dioxygen, which may limit its oxygen-releasing ability, argue against it. The ferrous/deoxygenated form exhibits a nitrite reductase activity and it could produce nitric oxide which in turn inhibits cellular respiration in response to hypoxia. In its ferrous/deoxygenated state, it may also exhibit GDI (Guanine nucleotide Dissociation Inhibitor) activity toward heterotrimeric G-alpha proteins, thereby regulating signal transduction to facilitate neuroprotective responses in the wake of hypoxia and associated oxidative stress. The polypeptide is Neuroglobin (Rattus norvegicus (Rat)).